The chain runs to 531 residues: Berberine bridge enzyme-like 9 (531 aa).

Residues 1 to 23 (MTSLTTQTLIITIFLLTIPTSFA) form the signal peptide. A disulfide bridge links C35 with C99. N-linked (GlcNAc...) asparagine glycans are attached at residues N76, N164, N271, N300, N314, N400, and N485. Residues 77–252 (MTRKPVAIVA…LAWKIKLVPV (176 aa)) enclose the FAD-binding PCMH-type domain. The segment at residues 114-177 (HDYDGMSYLS…DLRGFPAGIC (64 aa)) is a cross-link (6-(S-cysteinyl)-8alpha-(pros-histidyl)-FAD (His-Cys)).

This sequence belongs to the oxygen-dependent FAD-linked oxidoreductase family. FAD is required as a cofactor. The FAD cofactor is bound via a bicovalent 6-S-cysteinyl, 8alpha-N1-histidyl FAD linkage. Accumulates in cell walls of etiolated hypocotyls.

It is found in the secreted. Its subcellular location is the cell wall. The polypeptide is Berberine bridge enzyme-like 9 (Arabidopsis thaliana (Mouse-ear cress)).